Here is a 99-residue protein sequence, read N- to C-terminus: Small ribosomal subunit protein bS20 (99 aa).

Residues M1 to A20 show a composition bias toward basic residues. The interval M1 to A29 is disordered.

Belongs to the bacterial ribosomal protein bS20 family.

Binds directly to 16S ribosomal RNA. In Paracidovorax citrulli (strain AAC00-1) (Acidovorax citrulli), this protein is Small ribosomal subunit protein bS20.